The chain runs to 436 residues: 3-ketoacyl-CoA thiolase (436 aa).

Catalysis depends on cysteine 99, which acts as the Acyl-thioester intermediate. Catalysis depends on proton acceptor residues histidine 392 and cysteine 422.

The protein belongs to the thiolase-like superfamily. Thiolase family. In terms of assembly, heterotetramer of two alpha chains (FadJ) and two beta chains (FadI).

The protein localises to the cytoplasm. The enzyme catalyses an acyl-CoA + acetyl-CoA = a 3-oxoacyl-CoA + CoA. Its pathway is lipid metabolism; fatty acid beta-oxidation. In terms of biological role, catalyzes the final step of fatty acid oxidation in which acetyl-CoA is released and the CoA ester of a fatty acid two carbons shorter is formed. The polypeptide is 3-ketoacyl-CoA thiolase (Escherichia coli (strain 55989 / EAEC)).